Reading from the N-terminus, the 446-residue chain is MKRMIVRMTLPLLIVCLAFSSFSASARAASEEKYWDHWIERHAQPLDASNASNKDLRFLKKVLKGKRIVQLGETTHGAGEINATKVRMIKYLHEELGYDVLAFESGFPDTNASYLNMDQLTPKSTMKNSIYAVWHTEDVVELFDYMKEQKEKGDPLILTGFDIQSMKNSFNVAATQWVKAVDPEKAELLSQSENDFSTLVTDSNTFDEFSQKKEKLVKNYQKLIKFTKTHASELKENLPKEPKAYEMFMHSLQLRIDVMETYMLEEMKEKLEEYPENIEDFSFFMRDRMMAEQFQWVADTLYPKKKIIVWGHNYHLRKQNTKMIKDWVQLNGPNMGDYLPERLKKQTYTIGIYAYSGASLDSSDNKTVKPVTSPPPSGSLEALLKAADRPAVFVDFLHTKNKKGTSWMYTPRTALYWGYMEEQMILKEQYDGVIWLEHITPSVIIK.

The signal sequence occupies residues 1 to 28 (MKRMIVRMTLPLLIVCLAFSSFSASARA).

This chain is Putative hydrolase YbfO (ybfO), found in Bacillus subtilis (strain 168).